A 979-amino-acid chain; its full sequence is Ankycorbin (979 aa).

Position 1 is an N-acetylmethionine (Met1). Ser11 is modified (phosphoserine). ANK repeat units lie at residues Lys18–Ser51, Glu52–Ala81, Ser85–Asn114, Ser118–Leu147, Asp151–Ser180, Asn184–Leu213, and Leu217–Leu247. Positions Leu247–Val259 are enriched in basic and acidic residues. The tract at residues Leu247–Leu299 is disordered. Residue Thr249 is modified to Phosphothreonine. Residues Pro270 to Pro276 carry the Nuclear localization signal motif. 3 positions are modified to phosphoserine: Ser281, Ser286, and Ser293. The span at Pro282 to Leu299 shows a compositional bias: polar residues. Thr295 and Thr297 each carry phosphothreonine. Phosphoserine occurs at positions 300, 304, 318, 327, 329, 340, 341, and 358. Residues Leu349–Ser374 are a coiled coil. Disordered regions lie at residues Thr392 to Asp429 and Leu446 to Thr467. The stretch at Val430–Ser943 forms a coiled coil. Positions Leu446 to Gln457 are enriched in basic and acidic residues. The segment covering Asp458–Thr467 has biased composition (polar residues). Phosphoserine is present on residues Ser513, Ser516, Ser667, Ser694, and Ser914.

In terms of assembly, interacts with PALLD. Associates with actin. However, does not bind F-actin directly. As to expression, highly expressed in testis, where it localizes to seminiferous tubules (at protein level). Expressed in ganglion cell layer and in Muller cell fibers of the retina (at protein level). In small intestine highly expressed at the apical and lateral borders of absorptive epithelia (at protein level). In liver highly expressed along the bile canaliculi (at protein level).

The protein localises to the cytoplasm. It is found in the cytoskeleton. The protein resides in the stress fiber. Its subcellular location is the cell cortex. It localises to the cell junction. The protein localises to the nucleus. Plays a role in actin regulation at the ectoplasmic specialization, a type of cell junction specific to testis. Important for establishment of sperm polarity and normal spermatid adhesion. May also promote integrity of Sertoli cell tight junctions at the blood-testis barrier. The protein is Ankycorbin (Rai14) of Mus musculus (Mouse).